Reading from the N-terminus, the 162-residue chain is Phospholipase A and acyltransferase 2 (162 aa).

The Cytoplasmic segment spans residues 1–133; it reads MALARPRPRL…VSRSDQVTGA (133 aa). Residues 13–129 form the LRAT domain; sequence LIEISRFGYA…LRYGVSRSDQ (117 aa). Active-site residues include histidine 23 and histidine 35. Catalysis depends on cysteine 113, which acts as the Acyl-thioester intermediate. A helical membrane pass occupies residues 134 to 154; the sequence is VTTVGVAAGLLAAASLVGILL. Topologically, residues 155–162 are lumenal; sequence ARSKRERQ.

It belongs to the H-rev107 family. Expressed in liver, kidney, small intestine testis and colon. Undetectable in testis, placenta, salivary gland and fetal brain.

Its subcellular location is the cytoplasm. It localises to the membrane. The catalysed reaction is a 1,2-diacyl-sn-glycero-3-phosphocholine + H2O = a 1-acyl-sn-glycero-3-phosphocholine + a fatty acid + H(+). It catalyses the reaction a 1,2-diacyl-sn-glycero-3-phosphocholine + H2O = a 2-acyl-sn-glycero-3-phosphocholine + a fatty acid + H(+). The enzyme catalyses a 1,2-diacyl-sn-glycero-3-phosphoethanolamine + a 1,2-diacyl-sn-glycero-3-phosphocholine = an N-acyl-1,2-diacyl-sn-glycero-3-phosphoethanolamine + a 1-acyl-sn-glycero-3-phosphocholine + H(+). It carries out the reaction a 1,2-diacyl-sn-glycero-3-phosphoethanolamine + a 1,2-diacyl-sn-glycero-3-phosphocholine = an N-acyl-1,2-diacyl-sn-glycero-3-phosphoethanolamine + a 2-acyl-sn-glycero-3-phosphocholine + H(+). The catalysed reaction is 1,2-dihexadecanoyl-sn-glycero-3-phosphocholine + H2O = 1-hexadecanoyl-sn-glycero-3-phosphocholine + hexadecanoate + H(+). It catalyses the reaction 1,2-dihexadecanoyl-sn-glycero-3-phosphocholine + H2O = 2-hexadecanoyl-sn-glycero-3-phosphocholine + hexadecanoate + H(+). The enzyme catalyses 1-hexadecanoyl-2-(9Z-octadecenoyl)-sn-glycero-3-phosphocholine + H2O = 2-(9Z-octadecenoyl)-sn-glycero-3-phosphocholine + hexadecanoate + H(+). It carries out the reaction 1-hexadecanoyl-2-(9Z-octadecenoyl)-sn-glycero-3-phosphocholine + H2O = 1-hexadecanoyl-sn-glycero-3-phosphocholine + (9Z)-octadecenoate + H(+). The catalysed reaction is 1-hexadecanoyl-2-(5Z,8Z,11Z,14Z-eicosatetraenoyl)-sn-glycero-3-phosphocholine + H2O = 2-(5Z,8Z,11Z,14Z)-eicosatetraenoyl-sn-glycero-3-phosphocholine + hexadecanoate + H(+). It catalyses the reaction 1-hexadecanoyl-2-(9Z,12Z-octadecadienoyl)-sn-glycero-3-phosphoethanolamine + H2O = 1-hexadecanoyl-sn-glycero-3-phosphoethanolamine + (9Z,12Z)-octadecadienoate + H(+). The enzyme catalyses 1-hexadecanoyl-2-(9Z,12Z-octadecadienoyl)-sn-glycero-3-phosphoethanolamine + H2O = 2-(9Z,12Z)-octadecadienoyl-sn-glycero-3-phosphoethanolamine + hexadecanoate + H(+). It carries out the reaction 1-hexadecanoyl-2-(5Z,8Z,11Z,14Z-eicosatetraenoyl)-sn-glycero-3-phosphoethanolamine + H2O = 1-hexadecanoyl-sn-glycero-3-phosphoethanolamine + (5Z,8Z,11Z,14Z)-eicosatetraenoate + H(+). The catalysed reaction is 1-hexadecanoyl-2-(5Z,8Z,11Z,14Z-eicosatetraenoyl)-sn-glycero-3-phosphoethanolamine + H2O = 2-(5Z,8Z,11Z,14Z)-eicosatetraenoyl-sn-glycero-3-phosphoethanolamine + hexadecanoate + H(+). It catalyses the reaction 1,2-di-(9Z-octadecenoyl)-sn-glycero-3-phosphoethanolamine + 1,2-dihexadecanoyl-sn-glycero-3-phosphocholine = N-hexadecanoyl-1,2-di-(9Z-octadecenoyl)-sn-glycero-3-phosphoethanolamine + 2-hexadecanoyl-sn-glycero-3-phosphocholine + H(+). The enzyme catalyses 1,2-di-(9Z-octadecenoyl)-sn-glycero-3-phosphoethanolamine + 1,2-dihexadecanoyl-sn-glycero-3-phosphocholine = N-hexadecanoyl-1,2-di-(9Z-octadecenoyl)-sn-glycero-3-phosphoethanolamine + 1-hexadecanoyl-sn-glycero-3-phosphocholine + H(+). It carries out the reaction 1-hexanoyl-2-acyl-sn-glycero-3-phosphocholine + H2O = 1-hexanoyl-sn-glycero-3-phosphocholine + a fatty acid + H(+). The catalysed reaction is 1,2-diheptadecanoyl-sn-glycero-3-phosphoethanolamine + 1-(9Z-octadecenoyl)-2-hexadecanoyl-sn-glycero-3-phosphocholine = 1,2-diheptadecanoyl-sn-glycero-3-phospho-N-hexadecanoyl-ethanolamine + 1-(9Z-octadecenoyl)-sn-glycero-3-phosphocholine + H(+). It catalyses the reaction 1,2-diheptadecanoyl-sn-glycero-3-phosphoethanolamine + 1-(9Z-octadecenoyl)-2-hexadecanoyl-sn-glycero-3-phosphocholine = 1,2-diheptadecanoyl-sn-glycero-3-phospho-N-(9Z-octadecenoyl)-ethanolamine + 2-hexadecanoyl-sn-glycero-3-phosphocholine + H(+). The enzyme catalyses 1,2-dihexanoyl-sn-glycero-3-phosphocholine + 1,2-diheptanoyl-sn-glycero-3-phosphocholine = 1-heptanoyl-2-hexanoyl-sn-glycero-3-phosphocholine + 1-hexanoyl-2-heptanoyl-sn-glycero-3-phosphocholine. It carries out the reaction 1,2-diheptanoyl-sn-glycero-3-phosphocholine + 1,2-dihexadecanoyl-sn-glycero-3-phosphocholine = 1-hexadecanoyl-2-heptanoyl-sn-glycero-3-phosphocholine + 1-heptanoyl-2-hexadecanoyl-sn-glycero-3-phosphocholine. The catalysed reaction is 1,2-dihexanoyl-sn-glycero-3-phosphoethanolamine + 1,2-diheptanoyl-sn-glycero-3-phosphocholine = 1-heptanoyl-2-hexanoyl-sn-glycero-3-phosphoethanolamine + 1-hexanoyl-2-heptanoyl-sn-glycero-3-phosphocholine. It catalyses the reaction 1-hexanoyl-2-acyl-sn-glycero-3-phosphocholine + H2O = hexanoate + a 2-acyl-sn-glycero-3-phosphocholine + H(+). The enzyme catalyses 1,2-dihexanoyl-sn-glycero-3-phosphoethanolamine + 2-heptanoyl-sn-glycero-3-phosphocholine = hexanoyl-sn-glycero-3-phosphoethanolamine + 1-hexanoyl-2-heptanoyl-sn-glycero-3-phosphocholine. Exhibits both phospholipase A1/2 and acyltransferase activities. Shows phospholipase A1 (PLA1) and A2 (PLA2) activity, catalyzing the calcium-independent release of fatty acids from the sn-1 or sn-2 position of glycerophospholipids. For most substrates, PLA1 activity is much higher than PLA2 activity. Shows O-acyltransferase activity, catalyzing the transfer of a fatty acyl group from glycerophospholipid to the hydroxyl group of lysophospholipid. Shows N-acyltransferase activity, catalyzing the calcium-independent transfer of a fatty acyl group at the sn-1 position of phosphatidylcholine (PC) and other glycerophospholipids to the primary amine of phosphatidylethanolamine (PE), forming N-acylphosphatidylethanolamine (NAPE), which serves as precursor for N-acylethanolamines (NAEs). Catalyzes N-acylation of PE using both sn-1 and sn-2 palmitoyl groups of PC as acyl donor. Exhibits high phospholipase A1/2 activity and low N-acyltransferase activity. The polypeptide is Phospholipase A and acyltransferase 2 (Homo sapiens (Human)).